A 262-amino-acid chain; its full sequence is Malonyl-[acyl-carrier protein] O-methyltransferase (262 aa).

This sequence belongs to the methyltransferase superfamily.

The catalysed reaction is malonyl-[ACP] + S-adenosyl-L-methionine = malonyl-[ACP] methyl ester + S-adenosyl-L-homocysteine. Its pathway is cofactor biosynthesis; biotin biosynthesis. Converts the free carboxyl group of a malonyl-thioester to its methyl ester by transfer of a methyl group from S-adenosyl-L-methionine (SAM). It allows to synthesize pimeloyl-ACP via the fatty acid synthetic pathway. The chain is Malonyl-[acyl-carrier protein] O-methyltransferase from Dechloromonas aromatica (strain RCB).